The primary structure comprises 685 residues: Polyphosphate kinase (685 aa).

Asparagine 45 is a binding site for ATP. Mg(2+)-binding residues include arginine 375 and arginine 405. Histidine 435 acts as the Phosphohistidine intermediate in catalysis. 3 residues coordinate ATP: tyrosine 468, arginine 564, and histidine 592.

It belongs to the polyphosphate kinase 1 (PPK1) family. It depends on Mg(2+) as a cofactor. In terms of processing, an intermediate of this reaction is the autophosphorylated ppk in which a phosphate is covalently linked to a histidine residue through a N-P bond.

It catalyses the reaction [phosphate](n) + ATP = [phosphate](n+1) + ADP. Its function is as follows. Catalyzes the reversible transfer of the terminal phosphate of ATP to form a long-chain polyphosphate (polyP). This Neisseria gonorrhoeae (strain ATCC 700825 / FA 1090) protein is Polyphosphate kinase.